A 515-amino-acid polypeptide reads, in one-letter code: 2,3-bisphosphoglycerate-independent phosphoglycerate mutase (515 aa).

Mn(2+) contacts are provided by Asp14 and Ser64. Ser64 serves as the catalytic Phosphoserine intermediate. Substrate-binding positions include His125, 155 to 156 (RD), Arg187, Arg193, 263 to 266 (RADR), and Lys337. Mn(2+)-binding residues include Asp404, His408, Asp445, His446, and His464.

The protein belongs to the BPG-independent phosphoglycerate mutase family. Monomer. Mn(2+) is required as a cofactor.

The enzyme catalyses (2R)-2-phosphoglycerate = (2R)-3-phosphoglycerate. It participates in carbohydrate degradation; glycolysis; pyruvate from D-glyceraldehyde 3-phosphate: step 3/5. Its function is as follows. Catalyzes the interconversion of 2-phosphoglycerate and 3-phosphoglycerate. In Pseudomonas aeruginosa (strain ATCC 15692 / DSM 22644 / CIP 104116 / JCM 14847 / LMG 12228 / 1C / PRS 101 / PAO1), this protein is 2,3-bisphosphoglycerate-independent phosphoglycerate mutase.